We begin with the raw amino-acid sequence, 483 residues long: Alginate biosynthesis protein AlgA (483 aa).

It belongs to the mannose-6-phosphate isomerase type 2 family. As to quaternary structure, monomer. Requires Co(2+) as cofactor.

It carries out the reaction D-mannose 6-phosphate = D-fructose 6-phosphate. The catalysed reaction is alpha-D-mannose 1-phosphate + GTP + H(+) = GDP-alpha-D-mannose + diphosphate. Its pathway is nucleotide-sugar biosynthesis; GDP-alpha-D-mannose biosynthesis; GDP-alpha-D-mannose from alpha-D-mannose 1-phosphate (GTP route): step 1/1. It functions in the pathway nucleotide-sugar biosynthesis; GDP-alpha-D-mannose biosynthesis; alpha-D-mannose 1-phosphate from D-fructose 6-phosphate: step 1/2. Its function is as follows. Produces a precursor for alginate polymerization. The alginate layer provides a protective barrier against host immune defenses and antibiotics. The protein is Alginate biosynthesis protein AlgA (algA) of Pseudomonas syringae pv. tomato (strain ATCC BAA-871 / DC3000).